Consider the following 416-residue polypeptide: MTYVDTLGQQAKVASRQIAKLSTAAKNDLLNQVAKALVAESDYIFTENAKDMANASENGISKIMQDRLLLTEDRIAGIAEGVRQVADLQDPIGQVVRGYTNLDGLKIVQKRVPMGVIAMIFESRPNVSIDAFSLAFKTNNAIILRGGRDAINSNKALVTVARKALKNAGITADAVQFVEDTSHEVAEELMVATKYVDLLIPRGGARLIQTVKEKAKVPVIETGVGNCHIYVDKYANLDMATQIVINAKTQRPSVCNAAESLVVHADIVEEFLPNLEKAISKIQSVEFRADERALKLMEKAVPASPEDFATEFLDYIMSVKVVDSLDEAINWINTYTTSHSEAIVTQDISRAEQFQDDVDAAAVYVNASTRFTDGFVFGLGAEIGISTQKMHARGPMGLEALTSTKFYINGQGQIRE.

Belongs to the gamma-glutamyl phosphate reductase family.

The protein resides in the cytoplasm. The catalysed reaction is L-glutamate 5-semialdehyde + phosphate + NADP(+) = L-glutamyl 5-phosphate + NADPH + H(+). It functions in the pathway amino-acid biosynthesis; L-proline biosynthesis; L-glutamate 5-semialdehyde from L-glutamate: step 2/2. In terms of biological role, catalyzes the NADPH-dependent reduction of L-glutamate 5-phosphate into L-glutamate 5-semialdehyde and phosphate. The product spontaneously undergoes cyclization to form 1-pyrroline-5-carboxylate. This chain is Gamma-glutamyl phosphate reductase, found in Streptococcus thermophilus.